Consider the following 87-residue polypeptide: Putative regulatory protein BCQ_3657 (87 aa).

This sequence belongs to the RemA family.

This chain is Putative regulatory protein BCQ_3657, found in Bacillus cereus (strain Q1).